We begin with the raw amino-acid sequence, 452 residues long: Bifunctional protein GlmU (452 aa).

Residues 1–226 are pyrophosphorylase; the sequence is MKNIHAIILA…KFEIAGVNDK (226 aa). UDP-N-acetyl-alpha-D-glucosamine-binding positions include 9-12, Lys23, Gln73, 78-79, 100-102, Gly137, Glu151, Asn166, and Asn224; these read LAAG, GT, and YGD. Asp102 is a Mg(2+) binding site. Asn224 lines the Mg(2+) pocket. Positions 227-247 are linker; the sequence is VQLAELERIFQINQATQFMQQ. The segment at 248 to 452 is N-acetyltransferase; sequence GLSLKDPNRF…LKNWQRPTKK (205 aa). The UDP-N-acetyl-alpha-D-glucosamine site is built by Arg330 and Lys348. His360 (proton acceptor) is an active-site residue. Tyr363 and Asn374 together coordinate UDP-N-acetyl-alpha-D-glucosamine. Acetyl-CoA-binding positions include Ala377, 383 to 384, Ser402, Ala420, and Arg437; that span reads NY.

The protein in the N-terminal section; belongs to the N-acetylglucosamine-1-phosphate uridyltransferase family. In the C-terminal section; belongs to the transferase hexapeptide repeat family. As to quaternary structure, homotrimer. It depends on Mg(2+) as a cofactor.

The protein resides in the cytoplasm. It catalyses the reaction alpha-D-glucosamine 1-phosphate + acetyl-CoA = N-acetyl-alpha-D-glucosamine 1-phosphate + CoA + H(+). It carries out the reaction N-acetyl-alpha-D-glucosamine 1-phosphate + UTP + H(+) = UDP-N-acetyl-alpha-D-glucosamine + diphosphate. Its pathway is nucleotide-sugar biosynthesis; UDP-N-acetyl-alpha-D-glucosamine biosynthesis; N-acetyl-alpha-D-glucosamine 1-phosphate from alpha-D-glucosamine 6-phosphate (route II): step 2/2. It functions in the pathway nucleotide-sugar biosynthesis; UDP-N-acetyl-alpha-D-glucosamine biosynthesis; UDP-N-acetyl-alpha-D-glucosamine from N-acetyl-alpha-D-glucosamine 1-phosphate: step 1/1. The protein operates within bacterial outer membrane biogenesis; LPS lipid A biosynthesis. In terms of biological role, catalyzes the last two sequential reactions in the de novo biosynthetic pathway for UDP-N-acetylglucosamine (UDP-GlcNAc). The C-terminal domain catalyzes the transfer of acetyl group from acetyl coenzyme A to glucosamine-1-phosphate (GlcN-1-P) to produce N-acetylglucosamine-1-phosphate (GlcNAc-1-P), which is converted into UDP-GlcNAc by the transfer of uridine 5-monophosphate (from uridine 5-triphosphate), a reaction catalyzed by the N-terminal domain. In Ruthia magnifica subsp. Calyptogena magnifica, this protein is Bifunctional protein GlmU.